Here is a 609-residue protein sequence, read N- to C-terminus: Elongation factor 4 (609 aa).

In terms of domain architecture, tr-type G spans 11–193 (SRIRNFSIIA…QIVEKVPAPS (183 aa)). GTP is bound by residues 23 to 28 (DHGKST) and 140 to 143 (NKID).

This sequence belongs to the TRAFAC class translation factor GTPase superfamily. Classic translation factor GTPase family. LepA subfamily.

It is found in the cell membrane. The enzyme catalyses GTP + H2O = GDP + phosphate + H(+). Required for accurate and efficient protein synthesis under certain stress conditions. May act as a fidelity factor of the translation reaction, by catalyzing a one-codon backward translocation of tRNAs on improperly translocated ribosomes. Back-translocation proceeds from a post-translocation (POST) complex to a pre-translocation (PRE) complex, thus giving elongation factor G a second chance to translocate the tRNAs correctly. Binds to ribosomes in a GTP-dependent manner. The sequence is that of Elongation factor 4 from Halalkalibacterium halodurans (strain ATCC BAA-125 / DSM 18197 / FERM 7344 / JCM 9153 / C-125) (Bacillus halodurans).